Reading from the N-terminus, the 59-residue chain is UPF0509 protein KPN78578_12530 (59 aa).

Belongs to the UPF0509 family.

In Klebsiella pneumoniae subsp. pneumoniae (strain ATCC 700721 / MGH 78578), this protein is UPF0509 protein KPN78578_12530.